The following is a 183-amino-acid chain: NEDD8-conjugating enzyme Ubc12 (183 aa).

Methionine 1 is subject to N-acetylmethionine. The interval 1–28 (MIKLFSLKQQKKEEESAGGTKGSSKKAS) is disordered. Positions 29–173 (AAQLRIQKDI…VQRSMRGGYI (145 aa)) constitute a UBC core domain. Residue cysteine 111 is the Glycyl thioester intermediate of the active site.

Belongs to the ubiquitin-conjugating enzyme family. UBC12 subfamily. The acetylation of Met-1 increases affinity for DCUN1D1 by about 2 orders of magnitude and is crucial for NEDD8 transfer to cullins.

The enzyme catalyses [E1 NEDD8-activating enzyme]-S-[NEDD8 protein]-yl-L-cysteine + [E2 NEDD8-conjugating enzyme]-L-cysteine = [E1 NEDD8-activating enzyme]-L-cysteine + [E2 NEDD8-conjugating enzyme]-S-[NEDD8-protein]-yl-L-cysteine.. The protein operates within protein modification; protein neddylation. In terms of biological role, accepts the ubiquitin-like protein NEDD8 from the UBA3-NAE1 E1 complex and catalyzes its covalent attachment to other proteins. The specific interaction with the E3 ubiquitin ligase rbx1, but not rbx2, suggests that the rbx1-ube2m complex neddylates specific target proteins, such as cul1, cul2, cul3 and cul4. Involved in cell proliferation. This Xenopus laevis (African clawed frog) protein is NEDD8-conjugating enzyme Ubc12 (ube2m).